We begin with the raw amino-acid sequence, 150 residues long: Protein-arginine-phosphatase (150 aa).

The active-site Nucleophile is Cys7. 8-13 lines the substrate pocket; the sequence is TGNTCR. The active site involves Arg13. The Proton donor/acceptor role is filled by Asp118.

It belongs to the low molecular weight phosphotyrosine protein phosphatase family.

It catalyses the reaction N(omega)-phospho-L-arginyl-[protein] + H2O = L-arginyl-[protein] + phosphate. Its activity is regulated as follows. Efficiently inhibited by Cu(2+) ion, Zn(2+) ion, sodium pyrophosphate and N-ethylmaleimide, while the addition of Mg(2+), Ca(2+) or Fe(3+) ions has minimal effect. Inhibited in a competitive manner by vanadate. Functionally, catalyzes the specific dephosphorylation of phosphoarginine residues in a large number of proteins. Counteracts the protein arginine kinase McsB in vivo. Can dephosphorylate CtsR-P; thus, can restore the DNA-binding ability of the CtsR repressor by reversing the McsB-mediated phosphorylation. Is the only active pArg phosphatase present in B.subtilis. Exhibits almost no activity against pSer, pThr, or pTyr peptides. Appears to play a role in B.subtilis stress resistance. Protein arginine phosphorylation has a physiologically important role and is involved in the regulation of many critical cellular processes, such as protein homeostasis, motility, competence, and stringent and stress responses, by regulating gene expression and protein activity. The chain is Protein-arginine-phosphatase (ywlE) from Bacillus subtilis (strain 168).